The primary structure comprises 362 residues: Endopolygalacturonase II (362 aa).

Positions 1–20 (MHSFASLLRYGLAAGATLAS) are cleaved as a signal peptide. A propeptide spanning residues 21-27 (ASPIEAR) is cleaved from the precursor. Cys30 and Cys45 form a disulfide bridge. Residues 156-186 (SDDITLTDITINNADGDSLGGHNTDAFDVGN) form a PbH1 1 repeat. Catalysis depends on Asp201, which acts as the Proton donor. A disulfide bridge connects residues Cys203 and Cys219. PbH1 repeat units lie at residues 209 to 229 (GENI…SIGS), 238 to 259 (VKNV…RIKT), 267 to 289 (VSEI…VIQQ), and 301 to 322 (TNGV…DSKA). Residue His223 is part of the active site. An N-linked (GlcNAc...) asparagine glycan is attached at Asn240. 2 disulfides stabilise this stretch: Cys329-Cys334 and Cys353-Cys362.

The protein belongs to the glycosyl hydrolase 28 family.

The protein resides in the secreted. The enzyme catalyses (1,4-alpha-D-galacturonosyl)n+m + H2O = (1,4-alpha-D-galacturonosyl)n + (1,4-alpha-D-galacturonosyl)m.. Involved in maceration and soft-rotting of plant tissue. Hydrolyzes the 1,4-alpha glycosidic bonds of de-esterified pectate in the smooth region of the plant cell wall. The protein is Endopolygalacturonase II (pgaII) of Aspergillus awamori (Black koji mold).